The primary structure comprises 1058 residues: Zinc finger protein 865 (1058 aa).

Disordered stretches follow at residues 1–24 (MEANQAGSGAGGGGSSGIGGEDGV), 58–134 (LPCT…PPLF), and 156–201 (GNLK…ACDP). The segment covering 8–21 (SGAGGGGSSGIGGE) has biased composition (gly residues). Over residues 61 to 78 (TPGPPPQPPPQPPPPQYD) the composition is skewed to pro residues. The segment covering 93 to 113 (SSSSSSSSSSSSSSSSSSSSS) has biased composition (low complexity). Residues 120–133 (PPLPPTFGAPPPPL) are compositionally biased toward pro residues. Over residues 172–187 (GLGTPTGTPGPLTTPS) the composition is skewed to low complexity. 2 consecutive C2H2-type zinc fingers follow at residues 220 to 242 (FPCGVCQKSFKQSSHLVQHMLVH) and 248 to 270 (YECGICGRTYNHVSSLIRHRRCH). Residues 269–342 (CHKDVPPTPT…PPGVAMPPSA (74 aa)) form a disordered region. The segment covering 294–324 (PVSTASATASSDPAAVSSGPSATPATPATST) has biased composition (low complexity). C2H2-type zinc fingers lie at residues 350–372 (FACSLCWKVFKKPSHLHQHQIIH), 378–400 (FSCSVCSKSFNRRESLKRHVKTH), 407–429 (LPCGICGKVFRDASYLLKHQAAH), 439–461 (YPCDLCGKTYSAPQSLLRHKAAH), 546–568 (FCCGICGRAFGRRETLKRHERIH), 574–596 (HQCPVCGKRFRESFHLSKHHVVH), 602–624 (YKCELCGKVFGYPQSLTRHRQVH), 664–686 (YACSDCGEHFPDLFHVMSHKEAH), and 692–714 (YGCDACGKTFGFIENLMWHKLVH). Residues 459–486 (AAHAPPVATEPAKDGAASVPQPPPPFPP) are disordered. Residues 721–743 (LLAPTPSGPQSSDGGSSGGGTDA) form a disordered region. C2H2-type zinc fingers lie at residues 791–813 (FSCATCGQSFKHFLGLVTHKYVH), 819–841 (LGCGLCGQSFAGAYDLLLHRRSH), 847–869 (FRCPVCGKRFWEAALLMRHQRCH), 875–897 (YRCGVCGRGFLRSWYLRQHRVVH), 903–925 (FKCGVCAKHFAQSSSLAEHRRLH), 931–953 (QRCGACGKTFRYRSNLLEHQRLH), 959–981 (YRCEHCGKGFFYLSSVLRHQRAH), 988–1010 (LRCPACLKAFKDPGYFRKHLAAH), and 1016–1038 (FRCSSCGEGFANTYGLKKHRLMH). Residue lysine 801 forms a Glycyl lysine isopeptide (Lys-Gly) (interchain with G-Cter in SUMO2) linkage. A Glycyl lysine isopeptide (Lys-Gly) (interchain with G-Cter in SUMO2) cross-link involves residue lysine 1039.

Belongs to the krueppel C2H2-type zinc-finger protein family.

It localises to the nucleus. May be involved in transcriptional regulation. This is Zinc finger protein 865 (Znf865) from Mus musculus (Mouse).